The sequence spans 78 residues: TP53-regulated inhibitor of apoptosis 1 (78 aa).

Residues 1 to 52 adopt a coiled-coil conformation; sequence MNSVGEECTDMKREYDQCFNRWFAEKFLKGECSGDPCTELFRRYRDCVQKAI. The 51-residue stretch at 5-55 folds into the CHCH domain; it reads GEECTDMKREYDQCFNRWFAEKFLKGECSGDPCTELFRRYRDCVQKAIKDK. 2 consecutive short sequence motifs (cx9C motif) follow at residues 8–18 and 37–47; these read CTDMKREYDQC and CTELFRRYRDC. 2 disulfides stabilise this stretch: cysteine 8–cysteine 47 and cysteine 18–cysteine 37.

The protein belongs to the TRIAP1/MDM35 family. In terms of assembly, monomer. Forms a complex with prelid1 in the mitochondrion intermembrane space. Interacts with prelid3a. As to expression, expressed in the developing pronephros.

It is found in the mitochondrion. The protein resides in the mitochondrion intermembrane space. The catalysed reaction is a 1,2-diacyl-sn-glycero-3-phosphate(in) = a 1,2-diacyl-sn-glycero-3-phosphate(out). Functionally, involved in the modulation of the mitochondrial apoptotic pathway by ensuring the accumulation of cardiolipin (CL) in mitochondrial membranes. The triap1:prelid1 complex probably functions as a phosphatidic acid (PA) transporter across the mitochondrion intermembrane space to provide PA for cardiolipin CL synthesis in the inner membrane. Likewise, the triap1:prelid3a complex mediates the transfer of phosphatidic acid (PA) between liposomes (in vitro) and probably functions as a PA transporter across the mitochondrion intermembrane space (in vivo). Mediates cell survival by inhibiting activation of caspase-9 which prevents induction of apoptosis. Required for pronephros development; probably involved at an early stage in the formation of pronephric components derived from the somatic layer. In Xenopus tropicalis (Western clawed frog), this protein is TP53-regulated inhibitor of apoptosis 1.